Reading from the N-terminus, the 437-residue chain is Glycogen synthase (437 aa).

Position 15 (lysine 15) interacts with ADP-alpha-D-glucose.

It belongs to the glycosyltransferase 1 family. Bacterial/plant glycogen synthase subfamily.

It catalyses the reaction [(1-&gt;4)-alpha-D-glucosyl](n) + ADP-alpha-D-glucose = [(1-&gt;4)-alpha-D-glucosyl](n+1) + ADP + H(+). It functions in the pathway glycan biosynthesis; glycogen biosynthesis. Synthesizes alpha-1,4-glucan chains using ADP-glucose. In Thermus thermophilus (strain ATCC 27634 / DSM 579 / HB8), this protein is Glycogen synthase.